Consider the following 374-residue polypeptide: tRNA-specific 2-thiouridylase MnmA (374 aa).

ATP-binding positions include 12–19 (GMSGGVDS) and M38. The interval 98 to 100 (NPD) is interaction with target base in tRNA. C103 functions as the Nucleophile in the catalytic mechanism. The cysteines at positions 103 and 207 are disulfide-linked. G128 contacts ATP. The tract at residues 157-159 (KDQ) is interaction with tRNA. C207 (cysteine persulfide intermediate) is an active-site residue. The segment at 321-322 (RY) is interaction with tRNA.

It belongs to the MnmA/TRMU family.

The protein resides in the cytoplasm. It catalyses the reaction S-sulfanyl-L-cysteinyl-[protein] + uridine(34) in tRNA + AH2 + ATP = 2-thiouridine(34) in tRNA + L-cysteinyl-[protein] + A + AMP + diphosphate + H(+). Functionally, catalyzes the 2-thiolation of uridine at the wobble position (U34) of tRNA, leading to the formation of s(2)U34. The protein is tRNA-specific 2-thiouridylase MnmA of Aliivibrio fischeri (strain ATCC 700601 / ES114) (Vibrio fischeri).